Here is a 142-residue protein sequence, read N- to C-terminus: Large ribosomal subunit protein uL11 (142 aa).

Belongs to the universal ribosomal protein uL11 family. As to quaternary structure, part of the ribosomal stalk of the 50S ribosomal subunit. Interacts with L10 and the large rRNA to form the base of the stalk. L10 forms an elongated spine to which L12 dimers bind in a sequential fashion forming a multimeric L10(L12)X complex. Post-translationally, one or more lysine residues are methylated.

In terms of biological role, forms part of the ribosomal stalk which helps the ribosome interact with GTP-bound translation factors. The polypeptide is Large ribosomal subunit protein uL11 (Sinorhizobium fredii (strain NBRC 101917 / NGR234)).